The primary structure comprises 374 residues: Ribosomal RNA large subunit methyltransferase G (374 aa).

It belongs to the methyltransferase superfamily. RlmG family.

It is found in the cytoplasm. The catalysed reaction is guanosine(1835) in 23S rRNA + S-adenosyl-L-methionine = N(2)-methylguanosine(1835) in 23S rRNA + S-adenosyl-L-homocysteine + H(+). In terms of biological role, specifically methylates the guanine in position 1835 (m2G1835) of 23S rRNA. The protein is Ribosomal RNA large subunit methyltransferase G of Pseudomonas paraeruginosa (strain DSM 24068 / PA7) (Pseudomonas aeruginosa (strain PA7)).